The chain runs to 389 residues: Mesotocin receptor (389 aa).

Over 1–50 (MEGLCLNLDCSELPNSSWVNSSMENQNHSSNSTRDPLKRNEEVAKVEVTV) the chain is Extracellular. 4 N-linked (GlcNAc...) asparagine glycosylation sites follow: Asn-15, Asn-20, Asn-27, and Asn-31. The chain crosses the membrane as a helical span at residues 51 to 71 (LALILFLALAGNICVLLGIYI). At 72-87 (NRHKHSRMYFFMKHLS) the chain is on the cytoplasmic side. The chain crosses the membrane as a helical span at residues 88 to 108 (IADLVVAIFQVLPQLIWDITF). Residues 109–119 (RFYAPDLVCRL) lie on the Extracellular side of the membrane. Cysteines 117 and 192 form a disulfide. A helical membrane pass occupies residues 120-140 (VTYLQVVGMFASTYMLLLMSL). Residues 141–159 (DRCLAICQPLRSLHRRSDC) lie on the Cytoplasmic side of the membrane. A helical membrane pass occupies residues 160–180 (VYVLFTWILSFLLSTPQTVIF). At 181–207 (SLTEVGNGVYDCRADFIQPWGPKAYIT) the chain is on the extracellular side. The helical transmembrane segment at 208-228 (WITLAVYIIPVMILSVCYGLI) threads the bilayer. At 229 to 275 (SYKIWQNIRLKTVCESNLRLSTSRRATLSRVSSVRLISKAKIRTVKM) the chain is on the cytoplasmic side. The helical transmembrane segment at 276–296 (TFIIVLAYIVCWTPFFFVQMW) threads the bilayer. The Extracellular segment spans residues 297–308 (SVWDPNPPKEAS). Residues 309–329 (LFIIAMLLGSLNSCCNPWIYM) traverse the membrane as a helical segment. Over 330-389 (LFTGHLFHDLLQSFLCCSARYLKTQQQGSDLSASRKSNSSTFVLSRKSSSQKSITQPSTA) the chain is Cytoplasmic. The segment at 360-389 (LSASRKSNSSTFVLSRKSSSQKSITQPSTA) is disordered.

This sequence belongs to the G-protein coupled receptor 1 family. Vasopressin/oxytocin receptor subfamily. As to expression, highly expressed in the bladder. Also expressed in kidney, brain and skeletal muscle.

The protein resides in the cell membrane. Functionally, binds to mesotocin and may play a role in the regulation of water and salt transport. The polypeptide is Mesotocin receptor (Rhinella marina (Cane toad)).